A 367-amino-acid polypeptide reads, in one-letter code: Chorismate synthase (367 aa).

R48 is a binding site for NADP(+). FMN is bound by residues 125-127 (RSS), 243-244 (NA), G283, 298-302 (KPTSS), and R324.

It belongs to the chorismate synthase family. As to quaternary structure, homotetramer. Requires FMNH2 as cofactor.

The enzyme catalyses 5-O-(1-carboxyvinyl)-3-phosphoshikimate = chorismate + phosphate. It functions in the pathway metabolic intermediate biosynthesis; chorismate biosynthesis; chorismate from D-erythrose 4-phosphate and phosphoenolpyruvate: step 7/7. Catalyzes the anti-1,4-elimination of the C-3 phosphate and the C-6 proR hydrogen from 5-enolpyruvylshikimate-3-phosphate (EPSP) to yield chorismate, which is the branch point compound that serves as the starting substrate for the three terminal pathways of aromatic amino acid biosynthesis. This reaction introduces a second double bond into the aromatic ring system. This chain is Chorismate synthase, found in Psychrobacter arcticus (strain DSM 17307 / VKM B-2377 / 273-4).